Consider the following 124-residue polypeptide: Outer dense fiber protein 2 (124 aa).

Residues 13 to 124 (KEDSERLMEQ…EAIMEQLKEL (112 aa)) adopt a coiled-coil conformation.

This sequence belongs to the ODF2 family. As to quaternary structure, self-associates. Associates with microtubules and forms a fibrillar structure partially linked to the microtubule network. Interacts through its C-terminus with PLK1. Interacts with ODF1. Interacts with MARK4; the interaction is required for localization of ODF2 to centrioles. Interacts with TSSK4. Interacts with AKNA. Interacts with QRICH2. Interacts with CFAP58. Interacts with BBOF1. Interacts with CCDC38. Interacts with CCDC42. In terms of processing, tyrosine phosphorylated. As to expression, detected in sperm flagella (at protein level).

It localises to the cytoplasm. Its subcellular location is the cytoskeleton. The protein resides in the microtubule organizing center. The protein localises to the centrosome. It is found in the cell projection. It localises to the cilium. Its subcellular location is the centriole. The protein resides in the spindle pole. The protein localises to the flagellum. Functionally, seems to be a major component of sperm tail outer dense fibers (ODF). ODFs are filamentous structures located on the outside of the axoneme in the midpiece and principal piece of the mammalian sperm tail and may help to maintain the passive elastic structures and elastic recoil of the sperm tail. May have a modulating influence on sperm motility. Functions as a general scaffold protein that is specifically localized at the distal/subdistal appendages of mother centrioles. Component of the centrosome matrix required for the localization of PLK1 and NIN to the centrosomes. Required for the formation and/or maintenance of normal CETN1 assembly. The chain is Outer dense fiber protein 2 from Mesocricetus auratus (Golden hamster).